The sequence spans 304 residues: Small glutamine-rich tetratricopeptide repeat-containing protein beta (304 aa).

TPR repeat units follow at residues 15-49 (LREQSQMDTYTSDEQESLEVAIQCLETVFKISPED), 85-118 (ADQLKDEGNNHMKEENYAAAVDCYTQAIELDPNN), 119-152 (AVYYCNRAAAQSKLGHYTDAIKDCEKAIAIDSKY), and 153-186 (SKAYGRMGLALTALNKFEEAVTSYQKALDLDPEN). Lysine 131 is modified (N6-acetyllysine). Residues serine 293, serine 295, and serine 297 each carry the phosphoserine modification.

The protein belongs to the SGT family. Homooligomerize.

Co-chaperone that binds directly to HSC70 and HSP70 and regulates their ATPase activity. The sequence is that of Small glutamine-rich tetratricopeptide repeat-containing protein beta (SGTB) from Homo sapiens (Human).